The following is a 131-amino-acid chain: Small ribosomal subunit protein uS11 (131 aa).

The protein belongs to the universal ribosomal protein uS11 family. In terms of assembly, part of the 30S ribosomal subunit. Interacts with proteins S7 and S18. Binds to IF-3.

Its function is as follows. Located on the platform of the 30S subunit, it bridges several disparate RNA helices of the 16S rRNA. Forms part of the Shine-Dalgarno cleft in the 70S ribosome. This chain is Small ribosomal subunit protein uS11, found in Bacillus pumilus (strain SAFR-032).